The sequence spans 452 residues: MEVTTRLTWNDENHLRKLLGNVSLSLLYKSSVHGGSIEDMVERCSRQGCTITMAYIDYNMIVAFMLGNYINLHESSTEPNDSLWFSLQKKNDTTEIETLLLNTAPKIIDEQLVCRLSKTDIFIICRDNKIYLDKMITRNLKLRFYGHRQYLECEVFRVEGIKDNLDDIKRIIKAREHRNRLLADIRDYRPYADLVSEIRILLVGPVGSGKSSFFNSVKSIFHGHVTGQAVVGSDITSITERYRIYSVKDGKNGKSLPFMLCDTMGLDGAEGAGLCMDDIPHILKGCMPDRYQFNSRKPITPEHSTFITSPSLKDRIHCVAYVLDINSIDNLYSKMLAKVKQVHKEVLNCGIAYVALLTKVDDCSEVLQDNFLNMSRSMTSQSRVMNVHKMLGIPISNILMVGNYASDLELDPMKDILILSALRQMLRAADDFLEDLPLEETGAIERALQPCI.

Residues 1-159 (MEVTTRLTWN…YLECEVFRVE (159 aa)) form the TLDc domain.

This sequence belongs to the IFI44 family. As to quaternary structure, interacts with FKBP5; this interaction modulates IKBKB and IKBKE kinase activities.

The protein resides in the cytoplasm. Its function is as follows. Type I interferon-stimulated gene (ISG) that plays a critical role in antiviral and antibacterial activity. During bacterial infection, promotes macrophage differentiation and facilitates inflammatory cytokine secretion. Plays a role in the control of respiratory syncytial virus/RSV infection, reducing the ability of the virus to replicate. Exhibits a low antiviral activity against hepatitis C virus. Also acts as a feedback regulator of IFN responses by negatively regulating IKBKB and IKBKE kinase activities through interaction with FKBP5. This is Interferon-induced protein 44-like (IFI44L) from Homo sapiens (Human).